The following is a 153-amino-acid chain: Putative OPA3-like protein CG43998 (153 aa).

Residues 101–153 are a coiled coil; it reads ELSKTYTKTKKQNQEIEDQKRVLDECVDCISADVERNQREINWIKAALKNVEK.

It belongs to the OPA3 family.

The sequence is that of Putative OPA3-like protein CG43998 from Drosophila melanogaster (Fruit fly).